A 61-amino-acid chain; its full sequence is Large ribosomal subunit protein bL28 (61 aa).

The tract at residues 1 to 26 (MAKDFVTGKHTRFGNTRSHALNHSRR) is disordered.

Belongs to the bacterial ribosomal protein bL28 family.

The protein is Large ribosomal subunit protein bL28 of Pediococcus pentosaceus (strain ATCC 25745 / CCUG 21536 / LMG 10740 / 183-1w).